A 378-amino-acid polypeptide reads, in one-letter code: Erythronate-4-phosphate dehydrogenase (378 aa).

Residues S45 and T66 each coordinate substrate. Residues D146 and T175 each coordinate NAD(+). The active site involves R208. D232 contributes to the NAD(+) binding site. The active site involves E237. Catalysis depends on H254, which acts as the Proton donor. G257 provides a ligand contact to NAD(+). Y258 contributes to the substrate binding site.

Belongs to the D-isomer specific 2-hydroxyacid dehydrogenase family. PdxB subfamily. In terms of assembly, homodimer.

The protein resides in the cytoplasm. It carries out the reaction 4-phospho-D-erythronate + NAD(+) = (R)-3-hydroxy-2-oxo-4-phosphooxybutanoate + NADH + H(+). It participates in cofactor biosynthesis; pyridoxine 5'-phosphate biosynthesis; pyridoxine 5'-phosphate from D-erythrose 4-phosphate: step 2/5. In terms of biological role, catalyzes the oxidation of erythronate-4-phosphate to 3-hydroxy-2-oxo-4-phosphonooxybutanoate. The protein is Erythronate-4-phosphate dehydrogenase of Escherichia coli O6:H1 (strain CFT073 / ATCC 700928 / UPEC).